Here is a 499-residue protein sequence, read N- to C-terminus: Probable dipeptidase B (499 aa).

Cys26 is a catalytic residue.

Belongs to the peptidase C69 family.

The catalysed reaction is an L-aminoacyl-L-amino acid + H2O = 2 an L-alpha-amino acid. The protein is Probable dipeptidase B (pepDB) of Streptococcus pyogenes serotype M3 (strain ATCC BAA-595 / MGAS315).